We begin with the raw amino-acid sequence, 255 residues long: Mediator of RNA polymerase II transcription subunit 18 (255 aa).

This sequence belongs to the Mediator complex subunit 18 family. As to quaternary structure, component of the Mediator complex.

The protein resides in the nucleus. Functionally, component of the Mediator complex, a coactivator involved in the regulated transcription of nearly all RNA polymerase II-dependent genes. Mediator functions as a bridge to convey information from gene-specific regulatory proteins to the basal RNA polymerase II transcription machinery. Mediator is recruited to promoters by direct interactions with regulatory proteins and serves as a scaffold for the assembly of a functional preinitiation complex with RNA polymerase II and the general transcription factors. This is Mediator of RNA polymerase II transcription subunit 18 (SRB5) from Kluyveromyces lactis (strain ATCC 8585 / CBS 2359 / DSM 70799 / NBRC 1267 / NRRL Y-1140 / WM37) (Yeast).